Reading from the N-terminus, the 243-residue chain is MNQKNPKDTQNFITSKKHVKEILNHTNISKQDNVIEIGSGKGHFTKELVKMSRSVTAIEIDGGLCQVTKEAVNPSENIKVIQTDILKFSFPKHINYKIYGNIPYNISTDIVKRITFESQAKYSYLIVEKGFAKRLQNLQRALGLLLMVEMDIKMLKKVPPLYFHPKPSVDSVLIVLERHQPLISKKDYKKYRSFVYKWVNREYRVLFTKNQFRQALKHANVTNINKLSKEQFLSIFNSYKLFH.

The S-adenosyl-L-methionine site is built by asparagine 11, isoleucine 13, glycine 38, glutamate 59, aspartate 84, and asparagine 101.

The protein belongs to the class I-like SAM-binding methyltransferase superfamily. rRNA adenine N(6)-methyltransferase family.

It catalyses the reaction adenosine(2085) in 23S rRNA + 2 S-adenosyl-L-methionine = N(6)-dimethyladenosine(2085) in 23S rRNA + 2 S-adenosyl-L-homocysteine + 2 H(+). Its function is as follows. This protein produces a dimethylation of the adenine residue at position 2085 in 23S rRNA, resulting in reduced affinity between ribosomes and macrolide-lincosamide-streptogramin B antibiotics. The polypeptide is rRNA adenine N-6-methyltransferase (ermA1) (Staphylococcus aureus (strain Mu50 / ATCC 700699)).